The chain runs to 272 residues: Shikimate dehydrogenase (NADP(+)) (272 aa).

Residues 14–16 and T61 contribute to the shikimate site; that span reads SKS. The active-site Proton acceptor is K65. Residue E77 participates in NADP(+) binding. Residues N86 and D102 each coordinate shikimate. NADP(+)-binding positions include 126-130, 149-154, and M213; these read GAGGA and NRTVSR. Y215 serves as a coordination point for shikimate. G237 contacts NADP(+).

It belongs to the shikimate dehydrogenase family. Homodimer.

The catalysed reaction is shikimate + NADP(+) = 3-dehydroshikimate + NADPH + H(+). It functions in the pathway metabolic intermediate biosynthesis; chorismate biosynthesis; chorismate from D-erythrose 4-phosphate and phosphoenolpyruvate: step 4/7. Functionally, involved in the biosynthesis of the chorismate, which leads to the biosynthesis of aromatic amino acids. Catalyzes the reversible NADPH linked reduction of 3-dehydroshikimate (DHSA) to yield shikimate (SA). This chain is Shikimate dehydrogenase (NADP(+)), found in Shigella dysenteriae serotype 1 (strain Sd197).